Consider the following 133-residue polypeptide: uncharacterized protein (133 aa).

The helical transmembrane segment at 11–31 (YFLISVFLIFIVSGITYFYST) threads the bilayer.

It localises to the membrane. This is an uncharacterized protein from Borreliella burgdorferi (strain ATCC 35210 / DSM 4680 / CIP 102532 / B31) (Borrelia burgdorferi).